The sequence spans 150 residues: Large ribosomal subunit protein uL15 (150 aa).

The tract at residues 1-51 is disordered; that stretch reads MKLHTLRPAKGSVKTSKRIGRGTGSGRGGTSTKGHKGAKSRSGYSSKIGFE. Positions 21 to 31 are enriched in gly residues; the sequence is RGTGSGRGGTS.

Belongs to the universal ribosomal protein uL15 family. In terms of assembly, part of the 50S ribosomal subunit.

Functionally, binds to the 23S rRNA. The sequence is that of Large ribosomal subunit protein uL15 from Cytophaga hutchinsonii (strain ATCC 33406 / DSM 1761 / CIP 103989 / NBRC 15051 / NCIMB 9469 / D465).